The chain runs to 95 residues: Co-chaperonin GroES (95 aa).

Belongs to the GroES chaperonin family. In terms of assembly, heptamer of 7 subunits arranged in a ring. Interacts with the chaperonin GroEL.

The protein localises to the cytoplasm. Together with the chaperonin GroEL, plays an essential role in assisting protein folding. The GroEL-GroES system forms a nano-cage that allows encapsulation of the non-native substrate proteins and provides a physical environment optimized to promote and accelerate protein folding. GroES binds to the apical surface of the GroEL ring, thereby capping the opening of the GroEL channel. This Clostridium acetobutylicum (strain ATCC 824 / DSM 792 / JCM 1419 / IAM 19013 / LMG 5710 / NBRC 13948 / NRRL B-527 / VKM B-1787 / 2291 / W) protein is Co-chaperonin GroES.